Here is a 78-residue protein sequence, read N- to C-terminus: MAEEKTFEENLQELQQVVSNLEQGDIPLEKALTEFQKGIQLSSELQETLKNAEKTLTKVMQDNGEETNLDLGTDGENE.

Belongs to the XseB family. Heterooligomer composed of large and small subunits.

It localises to the cytoplasm. The enzyme catalyses Exonucleolytic cleavage in either 5'- to 3'- or 3'- to 5'-direction to yield nucleoside 5'-phosphates.. Functionally, bidirectionally degrades single-stranded DNA into large acid-insoluble oligonucleotides, which are then degraded further into small acid-soluble oligonucleotides. The polypeptide is Exodeoxyribonuclease 7 small subunit (Pediococcus pentosaceus (strain ATCC 25745 / CCUG 21536 / LMG 10740 / 183-1w)).